We begin with the raw amino-acid sequence, 388 residues long: Probable fatty acid desaturase DES1 (388 aa).

Positions 1–33 (MATTPMTVVDHEAEEAVAKAREDDKSRQVDAFD) are disordered. Residues 9–30 (VDHEAEEAVAKAREDDKSRQVD) are compositionally biased toward basic and acidic residues. 2 consecutive transmembrane segments (helical) span residues 62–82 (LWYVVRDVAAVVALGTAAAAM) and 85–105 (WAVWPVYWAVQGTMFWAFFVL). Positions 107-111 (HDCGH) match the Histidine box-1 motif. A helical membrane pass occupies residues 119 to 139 (TLNSVVGHLLHSFILIPYHGW). Residues 143–147 (HRTHH) carry the Histidine box-2 motif. The next 3 helical transmembrane spans lie at 177–194 (IRFTAPYPLLLFPLYLFY), 226–246 (WCIMLASLLAMSCAFGPLQVL), and 248–268 (MYGLPYLVFVMWLDLVTYLHH). The Histidine box-3 signature appears at 310-314 (HVIHH).

Belongs to the fatty acid desaturase type 1 family. In terms of tissue distribution, highly expressed in root hair cells. Barely detected in panicle, shoot apex, stems and leaves.

The protein resides in the membrane. The protein operates within lipid metabolism; polyunsaturated fatty acid biosynthesis. This chain is Probable fatty acid desaturase DES1, found in Sorghum bicolor (Sorghum).